We begin with the raw amino-acid sequence, 984 residues long: Serine/threonine-protein kinase Nek9 (984 aa).

The residue at position 2 (S2) is an N-acetylserine. Phosphoserine is present on residues S2, S13, S16, and S20. Positions 14 to 43 (INSDFGSESGGGGDSGPGPSAVPGPRAGGG) are disordered. Residue Y52 is modified to Phosphotyrosine. The Protein kinase domain occupies 52–308 (YIPIRVLGRG…ADALLDLPLL (257 aa)). 58 to 66 (LGRGAFGEA) contributes to the ATP binding site. Phosphoserine is present on S76. An ATP-binding site is contributed by K81. D176 functions as the Proton acceptor in the catalytic mechanism. T210 carries the phosphothreonine; by autocatalysis modification. T254 carries the post-translational modification Phosphothreonine. Phosphoserine is present on S331. Phosphothreonine is present on T333. 6 RCC1 repeats span residues 388–444 (KELY…VTDE), 445–498 (GQLY…LTRN), 499–550 (KEVY…LTQS), 551–615 (GKVL…IDER), 616–668 (GRLL…ATDD), and 669–726 (NHIF…IVEK). The interaction with NEK6 stretch occupies residues 732 to 896 (TIRSNSSGLS…GKALTSAACA (165 aa)). S741 carries the phosphoserine modification. Residues 744-790 (TVVQSSSPGGGIGGGGGGGGGGGGEEEDSQQESETPDPSGGFRGTME) form a disordered region. Over residues 751 to 766 (PGGGIGGGGGGGGGGG) the composition is skewed to gly residues. The segment covering 767–778 (GEEEDSQQESET) has biased composition (acidic residues). 2 positions are modified to phosphoserine: S808 and S839. T891 is subject to Phosphothreonine. Positions 896–945 (ACSALQVEVDRLQALVLKCLEEQQKLQQENLQMFTQLQKLNKKLEGGQQV) form a coiled coil. Residues 940-984 (EGGQQVGMHSRGTQTAKEEMEMDPKPDLDSESWCLLGTDSCRPSL) form a disordered region. At S949 the chain carries Phosphoserine. Positions 955–967 (AKEEMEMDPKPDL) are enriched in basic and acidic residues. A Phosphoserine modification is found at S983.

Belongs to the protein kinase superfamily. NEK Ser/Thr protein kinase family. NIMA subfamily. In terms of assembly, homodimer; homodimerization is required to activate NEK7. Binds to Ran GTPase. Has a greater affinity for Ran-GDP over Ran-GTP. Interacts with SSRP1 and SUPT16H, the 2 subunits of the FACT complex. Interacts with DYNLL1; phosphorylation at Ser-949 strongly reduces DYNLL1 binding. Mg(2+) serves as cofactor. Autophosphorylated on serine and threonine residues. When complexed with FACT, exhibits markedly elevated phosphorylation on Thr-210. During mitosis, not phosphorylated on Thr-210. Phosphorylated by CDK1 in vitro.

The protein resides in the cytoplasm. It localises to the nucleus. It carries out the reaction L-seryl-[protein] + ATP = O-phospho-L-seryl-[protein] + ADP + H(+). It catalyses the reaction L-threonyl-[protein] + ATP = O-phospho-L-threonyl-[protein] + ADP + H(+). Activated during mitosis by intramolecular autophosphorylation. Activity and autophosphorylation is activated by manganese &gt;&gt; magnesium ions. It is not cell-cycle regulated but activity is higher in G0-arrested cells. Its function is as follows. Pleiotropic regulator of mitotic progression, participating in the control of spindle dynamics and chromosome separation. Phosphorylates different histones, myelin basic protein, beta-casein, and BICD2. Phosphorylates histone H3 on serine and threonine residues and beta-casein on serine residues. Important for G1/S transition and S phase progression. Phosphorylates NEK6 and NEK7 and stimulates their activity by releasing the autoinhibitory functions of Tyr-108 and Tyr-97 respectively. The polypeptide is Serine/threonine-protein kinase Nek9 (Mus musculus (Mouse)).